The sequence spans 229 residues: Zinc finger matrin-type protein 4 (229 aa).

4 Matrin-type zinc fingers span residues 14-44 (SYCKVCSAQLISESQRVAHYESRKHASKVRL), 72-106 (DKNKCCTLCNMSFTSAVVADSHYQGKIHAKRLKLL), 145-175 (RYCGLCAAWFNNPLMAQQHYEGKKHKKNAAR), and 198-228 (YRCTTCSVSLNSIEQYHAHLQGSKHQTNLKN).

It is found in the nucleus. This chain is Zinc finger matrin-type protein 4 (Zmat4), found in Mus musculus (Mouse).